Consider the following 153-residue polypeptide: Prostaglandin E synthase (153 aa).

The Lumenal portion of the chain corresponds to Met1–Ala13. A helical transmembrane segment spans residues Leu14–Lys42. Glutathione is bound at residue Arg39. The Cytoplasmic portion of the chain corresponds to Lys43–Arg61. Residues Asp62–Ser91 form a helical membrane-spanning segment. Arg74–Glu78 contacts glutathione. Over Phe92–Asp96 the chain is Lumenal. The helical transmembrane segment at Pro97 to Gly120 threads the bilayer. Glutathione-binding residues include His114 and Tyr118. Over Lys121 to Ala124 the chain is Cytoplasmic. A helical membrane pass occupies residues Pro125–Leu153. Arg127–Tyr131 is a binding site for glutathione.

This sequence belongs to the MAPEG family. As to quaternary structure, homotrimer. The cofactor is glutathione.

Its subcellular location is the membrane. The protein localises to the cytoplasm. The protein resides in the perinuclear region. The enzyme catalyses prostaglandin H2 = prostaglandin E2. It carries out the reaction 2-glyceryl-prostaglandin H2 = 2-glyceryl-prostaglandin E2. The catalysed reaction is prostaglandin G2 = (15S)-15-hydroperoxy-prostaglandin E2. It catalyses the reaction 1-chloro-2,4-dinitrobenzene + glutathione = 2,4-dinitrophenyl-S-glutathione + chloride + H(+). The enzyme catalyses (5S)-hydroperoxy-(6E,8Z,11Z,14Z)-eicosatetraenoate + 2 glutathione = (5S)-hydroxy-(6E,8Z,11Z,14Z)-eicosatetraenoate + glutathione disulfide + H2O. It functions in the pathway lipid metabolism; prostaglandin biosynthesis. Terminal enzyme of the cyclooxygenase (COX)-2-mediated prostaglandin E2 (PGE2) biosynthetic pathway. Catalyzes the glutathione-dependent oxidoreduction of prostaglandin endoperoxide H2 (PGH2) to prostaglandin E2 (PGE2) in response to inflammatory stimuli. Plays a key role in inflammation response, fever and pain. Also catalyzes the oxidoreduction of endocannabinoids into prostaglandin glycerol esters and PGG2 into 15-hydroperoxy-PGE2. In addition, displays low glutathione transferase and glutathione-dependent peroxidase activities, toward 1-chloro-2,4-dinitrobenzene and 5-hydroperoxyicosatetraenoic acid (5-HPETE), respectively. The protein is Prostaglandin E synthase (PTGES) of Equus caballus (Horse).